The following is a 250-amino-acid chain: Insertion sequence IS232 putative ATP-binding protein (250 aa).

Residue 108-115 (GPSGVGKT) participates in ATP binding.

The protein belongs to the IS21/IS1162 putative ATP-binding protein family.

This is Insertion sequence IS232 putative ATP-binding protein from Bacillus thuringiensis subsp. berliner.